A 448-amino-acid polypeptide reads, in one-letter code: tRNA(Ile)-lysidine synthase (448 aa).

27–32 (SGGVDS) serves as a coordination point for ATP.

It belongs to the tRNA(Ile)-lysidine synthase family.

The protein resides in the cytoplasm. The catalysed reaction is cytidine(34) in tRNA(Ile2) + L-lysine + ATP = lysidine(34) in tRNA(Ile2) + AMP + diphosphate + H(+). In terms of biological role, ligates lysine onto the cytidine present at position 34 of the AUA codon-specific tRNA(Ile) that contains the anticodon CAU, in an ATP-dependent manner. Cytidine is converted to lysidine, thus changing the amino acid specificity of the tRNA from methionine to isoleucine. The chain is tRNA(Ile)-lysidine synthase from Vibrio campbellii (strain ATCC BAA-1116).